A 284-amino-acid chain; its full sequence is RNase adapter protein RapZ (284 aa).

8–15 (GRSGSGKS) is a binding site for ATP. 56–59 (DVRN) is a binding site for GTP. Residues 266–284 (RSRGKNVQSRHRTLEKRKS) are RNA-binding.

It belongs to the RapZ-like family. RapZ subfamily. As to quaternary structure, homotrimer.

Its function is as follows. Modulates the synthesis of GlmS, by affecting the processing and stability of the regulatory small RNA GlmZ. When glucosamine-6-phosphate (GlcN6P) concentrations are high in the cell, RapZ binds GlmZ and targets it to cleavage by RNase E. Consequently, GlmZ is inactivated and unable to activate GlmS synthesis. Under low GlcN6P concentrations, RapZ is sequestered and inactivated by an other regulatory small RNA, GlmY, preventing GlmZ degradation and leading to synthesis of GlmS. The polypeptide is RNase adapter protein RapZ (Cronobacter sakazakii (strain ATCC BAA-894) (Enterobacter sakazakii)).